Here is a 387-residue protein sequence, read N- to C-terminus: Deoxyguanosinetriphosphate triphosphohydrolase-like protein (387 aa).

Residues 1–26 form a disordered region; sequence MTAPYASDPQRARGRRVKEEESTFRS. Residues 17–26 are compositionally biased toward basic and acidic residues; sequence VKEEESTFRS. An HD domain is found at 62–198; sequence RLTHSIEVAQ…AAIADDVAYN (137 aa).

The protein belongs to the dGTPase family. Type 2 subfamily.

The polypeptide is Deoxyguanosinetriphosphate triphosphohydrolase-like protein (Roseobacter denitrificans (strain ATCC 33942 / OCh 114) (Erythrobacter sp. (strain OCh 114))).